The following is a 234-amino-acid chain: LexA repressor (234 aa).

The segment at residues 41–61 (RAEIAAELGFRSPNAAEEHLK) is a DNA-binding region (H-T-H motif). Active-site for autocatalytic cleavage activity residues include Ser152 and Lys189.

Belongs to the peptidase S24 family. As to quaternary structure, homodimer.

It catalyses the reaction Hydrolysis of Ala-|-Gly bond in repressor LexA.. Represses a number of genes involved in the response to DNA damage (SOS response), including recA and lexA. In the presence of single-stranded DNA, RecA interacts with LexA causing an autocatalytic cleavage which disrupts the DNA-binding part of LexA, leading to derepression of the SOS regulon and eventually DNA repair. This chain is LexA repressor, found in Polaromonas naphthalenivorans (strain CJ2).